A 490-amino-acid polypeptide reads, in one-letter code: Betaine aldehyde dehydrogenase (490 aa).

The K(+) site is built by Ser26, Ile27, and Asp93. 150–152 (GAW) is a binding site for NAD(+). Catalysis depends on Lys162, which acts as the Charge relay system. Residues 176–179 (KPSE) and 230–233 (GVET) each bind NAD(+). Leu246 lines the K(+) pocket. Glu252 functions as the Proton acceptor in the catalytic mechanism. The NAD(+) site is built by Gly254, Cys286, and Glu387. Residue Cys286 is the Nucleophile of the active site. Cys286 is modified (cysteine sulfenic acid (-SOH)). Lys457 and Gly460 together coordinate K(+). Glu464 functions as the Charge relay system in the catalytic mechanism.

This sequence belongs to the aldehyde dehydrogenase family. Dimer of dimers. It depends on K(+) as a cofactor.

The enzyme catalyses betaine aldehyde + NAD(+) + H2O = glycine betaine + NADH + 2 H(+). It functions in the pathway amine and polyamine biosynthesis; betaine biosynthesis via choline pathway; betaine from betaine aldehyde: step 1/1. Involved in the biosynthesis of the osmoprotectant glycine betaine. Catalyzes the irreversible oxidation of betaine aldehyde to the corresponding acid. The protein is Betaine aldehyde dehydrogenase of Acinetobacter baumannii (strain AB307-0294).